A 340-amino-acid chain; its full sequence is Guanine nucleotide-binding protein subunit beta-4 (340 aa).

N-acetylserine is present on Ser2. Residue Ser2 is modified to Phosphoserine. WD repeat units follow at residues 53 to 92 (GHLAKIYAMHWGYDSRLLVSASQDGKLIIWDSYTTNKMHA), 95 to 134 (LRSSWVMTCAYAPSGNYVACGGLDNICSIYNLKTREGNVR), 141 to 179 (GHTGYLSCCRFLDDSQIVTSSGDTTCALWDIETAQQTTT), 182 to 221 (GHSGDVMSLSLSPDMRTFVSGACDASSKLWDIRDGMCRQS), and 224 to 263 (GHVSDINAVSFFPNGYAFATGSDDATCRLFDLRADQELLL). His266 is subject to Phosphohistidine. WD repeat units follow at residues 268-307 (NIICGITSVAFSKSGRLLLAGYDDFNCNVWDTLKGDRAGV) and 310-339 (GHDNRVSCLGVTDDGMAVATGSWDSFLRIW).

This sequence belongs to the WD repeat G protein beta family. In terms of assembly, g proteins are composed of 3 units, alpha, beta and gamma. Strongly expressed in lung and placenta, whereas it is weakly expressed in brain and heart. Abundantly expressed in the axons and Schwann cells of peripheral nerves.

In terms of biological role, guanine nucleotide-binding proteins (G proteins) are involved as a modulator or transducer in various transmembrane signaling systems. The beta and gamma chains are required for the GTPase activity, for replacement of GDP by GTP, and for G protein-effector interaction. The chain is Guanine nucleotide-binding protein subunit beta-4 (GNB4) from Homo sapiens (Human).